The primary structure comprises 161 residues: Nucleotide-binding protein LHK_01423 (161 aa).

Belongs to the YajQ family.

Its function is as follows. Nucleotide-binding protein. The sequence is that of Nucleotide-binding protein LHK_01423 from Laribacter hongkongensis (strain HLHK9).